The following is a 738-amino-acid chain: Envelope glycoprotein gp160 (738 aa).

Positions 1-21 (MCGKSLLCVASLLASAYLVYC) are cleaved as a signal peptide. The Extracellular segment spans residues 22–670 (TQYVTVFYGV…LTSWIKYIQY (649 aa)). Asn36 is a glycosylation site (N-linked (GlcNAc...) asparagine; by host). Residues Cys43 and Cys56 are joined by a disulfide bond. Asn69, Asn113, Asn117, Asn118, Asn132, Asn141, Asn169, Asn182, Asn197, Asn229, Asn232, Asn263, Asn269, Asn280, Asn291, Asn301, Asn356, Asn362, Asn389, Asn402, Asn439, Asn454, and Asn457 each carry an N-linked (GlcNAc...) asparagine; by host glycan. 5 disulfide bridges follow: Cys100–Cys205, Cys107–Cys196, Cys112–Cys153, Cys218–Cys248, and Cys228–Cys240. Residues 112-152 (CNSTTNNTTTTGSTTGMSEINETSPSYSDNCTGLGKEEIVN) are V1. A V2 region spans residues 153–196 (CQFYMTGLERDKKKQYNETWYSKDVVCESNNTKDGKNRCYMNHC). The V3 stretch occupies residues 296-328 (CKRPGNKTVVPITLMSGLVFHSQPINTRPRQAW). Cysteines 296 and 329 form a disulfide. 2 cysteine pairs are disulfide-bonded: Cys381–Cys438 and Cys388–Cys411. Positions 388–411 (CNMTWFLNWVENRPNQTQHNYAPC) are V4. Residues 454–460 (NQTNITF) form a V5 region. Positions 503-523 (GVFVLGFLGFLATAGSAMGAA) are fusion peptide. Residues 566 to 582 (LQARVTAIEKYLKDQAQ) are immunosuppression. 3 N-linked (GlcNAc...) asparagine; by host glycosylation sites follow: Asn602, Asn611, and Asn627. A coiled-coil region spans residues 615-636 (QEWEKQVRYLEANISQSLEQAQ). An MPER; binding to GalCer region spans residues 648–669 (KLNSWDVFGNWFDLTSWIKYIQ). A helical membrane pass occupies residues 671–691 (GVYIVVGVIVLRIAIYIVQLL). Over 692-738 (SRLRKGYRPVFSSPPGYLQQIHIHTDRGQPANEGTEEDDRDDDGYDL) the chain is Cytoplasmic. Residues 698 to 701 (YRPV) carry the YXXV motif; contains endocytosis signal motif. A disordered region spans residues 716–738 (TDRGQPANEGTEEDDRDDDGYDL). Residues 725–738 (GTEEDDRDDDGYDL) are compositionally biased toward acidic residues.

In terms of assembly, the mature envelope protein (Env) consists of a homotrimer of non-covalently associated gp120-gp41 heterodimers. The resulting complex protrudes from the virus surface as a spike. There seems to be as few as 10 spikes on the average virion. Interacts with human CD4, CCR5 and CXCR4, to form a P4HB/PDI-CD4-CXCR4-gp120 complex. Gp120 also interacts with the C-type lectins CD209/DC-SIGN and CLEC4M/DC-SIGNR (collectively referred to as DC-SIGN(R)). Gp120 and gp41 interact with GalCer. As to quaternary structure, the mature envelope protein (Env) consists of a homotrimer of non-covalently associated gp120-gp41 heterodimers. The resulting complex protrudes from the virus surface as a spike. There seems to be as few as 10 spikes on the average virion. Post-translationally, specific enzymatic cleavages in vivo yield mature proteins. Envelope glycoproteins are synthesized as an inactive precursor that is heavily N-glycosylated and processed likely by host cell furin in the Golgi to yield the mature SU and TM proteins. The cleavage site between SU and TM requires the minimal sequence [KR]-X-[KR]-R. In terms of processing, palmitoylation of the transmembrane protein and of Env polyprotein (prior to its proteolytic cleavage) is essential for their association with host cell membrane lipid rafts. Palmitoylation is therefore required for envelope trafficking to classical lipid rafts, but not for viral replication.

Its subcellular location is the virion membrane. It localises to the host cell membrane. It is found in the host endosome membrane. The surface protein gp120 (SU) attaches the virus to the host lymphoid cell by binding to the primary receptor CD4. This interaction induces a structural rearrangement creating a high affinity binding site for a chemokine coreceptor like CXCR4 and/or CCR5. This peculiar 2 stage receptor-interaction strategy allows gp120 to maintain the highly conserved coreceptor-binding site in a cryptic conformation, protected from neutralizing antibodies. Since CD4 also displays a binding site for the disulfide-isomerase P4HB/PDI, a P4HB/PDI-CD4-CXCR4-gp120 complex may form. In that complex, P4HB/PDI could reach and reduce gp120 disulfide bonds, causing major conformational changes in gp120. TXN, another PDI family member could also be involved in disulfide rearrangements in Env during fusion. These changes are transmitted to the transmembrane protein gp41 and are thought to activate its fusogenic potential by unmasking its fusion peptide. In terms of biological role, the surface protein gp120 is a ligand for CD209/DC-SIGN and CLEC4M/DC-SIGNR, which are respectively found on dendritic cells (DCs), and on endothelial cells of liver sinusoids and lymph node sinuses. These interactions allow capture of viral particles at mucosal surfaces by these cells and subsequent transmission to permissive cells. DCs are professional antigen presenting cells, critical for host immunity by inducing specific immune responses against a broad variety of pathogens. They act as sentinels in various tissues where they take up antigen, process it, and present it to T-cells following migration to lymphoid organs. HIV subverts the migration properties of dendritic cells to gain access to CD4+ T-cells in lymph nodes. Virus transmission to permissive T-cells occurs either in trans (without DCs infection, through viral capture and transmission), or in cis (following DCs productive infection, through the usual CD4-gp120 interaction), thereby inducing a robust infection. In trans infection, bound virions remain infectious over days and it is proposed that they are not degraded, but protected in non-lysosomal acidic organelles within the DCs close to the cell membrane thus contributing to the viral infectious potential during DCs' migration from the periphery to the lymphoid tissues. On arrival at lymphoid tissues, intact virions recycle back to DCs' cell surface allowing virus transmission to CD4+ T-cells. Virion capture also seems to lead to MHC-II-restricted viral antigen presentation, and probably to the activation of HIV-specific CD4+ cells. Its function is as follows. The transmembrane protein gp41 (TM) acts as a class I viral fusion protein. Under the current model, the protein has at least 3 conformational states: pre-fusion native state, pre-hairpin intermediate state, and post-fusion hairpin state. During fusion of viral and target intracellular membranes, the coiled coil regions (heptad repeats) assume a trimer-of-hairpins structure, positioning the fusion peptide in close proximity to the C-terminal region of the ectodomain. The formation of this structure appears to drive apposition and subsequent fusion of viral and target cell membranes. Complete fusion occurs in host cell endosomes and is dynamin-dependent, however some lipid transfer might occur at the plasma membrane. The virus undergoes clathrin-dependent internalization long before endosomal fusion, thus minimizing the surface exposure of conserved viral epitopes during fusion and reducing the efficacy of inhibitors targeting these epitopes. Membranes fusion leads to delivery of the nucleocapsid into the cytoplasm. Functionally, the envelope glycoprotein gp160 precursor down-modulates cell surface CD4 antigen by interacting with it in the endoplasmic reticulum and blocking its transport to the cell surface. The gp120-gp41 heterodimer seems to contribute to T-cell depletion during HIV-1 infection. The envelope glycoproteins expressed on the surface of infected cells induce apoptosis through an interaction with uninfected cells expressing the receptor (CD4) and the coreceptors CXCR4 or CCR5. This type of bystander killing may be obtained by at least three distinct mechanisms. First, the interaction between the 2 cells can induce cellular fusion followed by nuclear fusion within the syncytium. Syncytia are condemned to die from apoptosis. Second, the 2 interacting cells may not fuse entirely and simply exchange plasma membrane lipids, after a sort of hemifusion process, followed by rapid death. Third, it is possible that virus-infected cells, on the point of undergoing apoptosis, fuse with CD4-expressing cells, in which case apoptosis is rapidly transmitted from one cell to the other and thus occurs in a sort of contagious fashion. In terms of biological role, the gp120-gp41 heterodimer allows rapid transcytosis of the virus through CD4 negative cells such as simple epithelial monolayers of the intestinal, rectal and endocervical epithelial barriers. Both gp120 and gp41 specifically recognize glycosphingolipids galactosyl-ceramide (GalCer) or 3' sulfo-galactosyl-ceramide (GalS) present in the lipid rafts structures of epithelial cells. Binding to these alternative receptors allows the rapid transcytosis of the virus through the epithelial cells. This transcytotic vesicle-mediated transport of virions from the apical side to the basolateral side of the epithelial cells does not involve infection of the cells themselves. This is Envelope glycoprotein gp160 (env) from Human immunodeficiency virus type 2 subtype A (isolate Ghana-1) (HIV-2).